We begin with the raw amino-acid sequence, 447 residues long: 3-phosphoshikimate 1-carboxyvinyltransferase (447 aa).

Residues K36, S37, and R41 each coordinate 3-phosphoshikimate. Position 36 (K36) interacts with phosphoenolpyruvate. Residues G109 and R138 each contribute to the phosphoenolpyruvate site. The 3-phosphoshikimate site is built by S183, Q185, D333, and K360. Q185 contacts phosphoenolpyruvate. Catalysis depends on D333, which acts as the Proton acceptor. Residues R364 and R406 each contribute to the phosphoenolpyruvate site.

This sequence belongs to the EPSP synthase family. As to quaternary structure, monomer.

It localises to the cytoplasm. The enzyme catalyses 3-phosphoshikimate + phosphoenolpyruvate = 5-O-(1-carboxyvinyl)-3-phosphoshikimate + phosphate. It functions in the pathway metabolic intermediate biosynthesis; chorismate biosynthesis; chorismate from D-erythrose 4-phosphate and phosphoenolpyruvate: step 6/7. Catalyzes the transfer of the enolpyruvyl moiety of phosphoenolpyruvate (PEP) to the 5-hydroxyl of shikimate-3-phosphate (S3P) to produce enolpyruvyl shikimate-3-phosphate and inorganic phosphate. This is 3-phosphoshikimate 1-carboxyvinyltransferase from Synechocystis sp. (strain ATCC 27184 / PCC 6803 / Kazusa).